The sequence spans 116 residues: Cell cycle protein GpsB (116 aa).

Residues 32-69 (LDDVIKDYETYSALVKELREENSRLKQELSKRMQEAPN) are a coiled coil. Positions 57 to 78 (KQELSKRMQEAPNSTASQVHQS) are disordered. Positions 67–78 (APNSTASQVHQS) are enriched in polar residues.

The protein belongs to the GpsB family. In terms of assembly, forms polymers through the coiled coil domains. Interacts with PBP1, MreC and EzrA.

The protein resides in the cytoplasm. Divisome component that associates with the complex late in its assembly, after the Z-ring is formed, and is dependent on DivIC and PBP2B for its recruitment to the divisome. Together with EzrA, is a key component of the system that regulates PBP1 localization during cell cycle progression. Its main role could be the removal of PBP1 from the cell pole after pole maturation is completed. Also contributes to the recruitment of PBP1 to the division complex. Not essential for septum formation. This Streptococcus gordonii (strain Challis / ATCC 35105 / BCRC 15272 / CH1 / DL1 / V288) protein is Cell cycle protein GpsB.